An 877-amino-acid polypeptide reads, in one-letter code: Translation initiation factor IF-2 (877 aa).

The tract at residues 48–289 (SSFQNSAPAE…QITKRKERPL (242 aa)) is disordered. Residues 78-89 (RKNEKKPEENNT) are compositionally biased toward basic and acidic residues. The span at 92 to 101 (KSNRRRNNKR) shows a compositional bias: basic residues. Residues 102-116 (RSSDRARDNKERDAK) are compositionally biased toward basic and acidic residues. Low complexity predominate over residues 123-132 (KAAALLQQFK). 2 stretches are compositionally biased toward basic and acidic residues: residues 135–155 (QRAE…EYHE) and 162–189 (KEQS…EKKV). The segment covering 277–286 (PRKQITKRKE) has biased composition (basic residues). Positions 378-547 (KRPPVVTIMG…LLQADVMELK (170 aa)) constitute a tr-type G domain. Positions 387–394 (GHVDHGKT) are G1. 387–394 (GHVDHGKT) contacts GTP. Residues 412-416 (GITQR) are G2. The G3 stretch occupies residues 433–436 (DTPG). Residues 433-437 (DTPGH) and 487-490 (NKMD) contribute to the GTP site. The interval 487–490 (NKMD) is G4. The segment at 523–525 (SAK) is G5.

It belongs to the TRAFAC class translation factor GTPase superfamily. Classic translation factor GTPase family. IF-2 subfamily.

The protein resides in the cytoplasm. In terms of biological role, one of the essential components for the initiation of protein synthesis. Protects formylmethionyl-tRNA from spontaneous hydrolysis and promotes its binding to the 30S ribosomal subunits. Also involved in the hydrolysis of GTP during the formation of the 70S ribosomal complex. The protein is Translation initiation factor IF-2 of Lactobacillus acidophilus (strain ATCC 700396 / NCK56 / N2 / NCFM).